The primary structure comprises 434 residues: Putative nuclease OPG089 (434 aa).

Belongs to the XPG/RAD2 endonuclease family. FEN1 subfamily. It depends on Mg(2+) as a cofactor.

Its subcellular location is the virion. Functionally, putative nuclease that seems to be required for double-strand break repair, homologous recombination, and production of full-length viral genomic DNA. This is Putative nuclease OPG089 (OPG089) from Monkeypox virus.